We begin with the raw amino-acid sequence, 580 residues long: CRISPR-associated exonuclease Cas4/endonuclease Cas1 fusion (580 aa).

Positions 1–223 (MAPSDTPPSA…RCSLLPICLP (223 aa)) are CRISPR-associated exonuclease Cas4. C44 contacts [4Fe-4S] cluster. Mn(2+)-binding residues include D112 and E125. [4Fe-4S] cluster-binding residues include C212, C215, and C221. Positions 248–580 (LYGQTPGARI…IPRYPHYCPR (333 aa)) are CRISPR-associated endonuclease Cas1. Residues E401, H472, and E487 each coordinate Mn(2+).

In the N-terminal section; belongs to the CRISPR-associated exonuclease Cas4 family. The protein in the C-terminal section; belongs to the CRISPR-associated endonuclease Cas1 family. In terms of assembly, homodimer, forms a heterotetramer with a Cas2 homodimer. Requires [4Fe-4S] cluster as cofactor. The cofactor is Mg(2+). It depends on Mn(2+) as a cofactor.

The catalysed reaction is exonucleolytic cleavage in the 5'- to 3'-direction to yield nucleoside 3'-phosphates.. CRISPR (clustered regularly interspaced short palindromic repeat), is an adaptive immune system that provides protection against mobile genetic elements (viruses, transposable elements and conjugative plasmids). CRISPR clusters contain spacers, sequences complementary to antecedent mobile elements, and target invading nucleic acids. CRISPR clusters are transcribed and processed into CRISPR RNA (crRNA). The Cas4 region acts as a ssDNA exonuclease, while the Cas1 region acts as a dsDNA endonuclease. Involved in the integration of spacer DNA into the CRISPR cassette. The protein is CRISPR-associated exonuclease Cas4/endonuclease Cas1 fusion (cas4-cas1) of Rhodospirillum rubrum (strain ATCC 11170 / ATH 1.1.1 / DSM 467 / LMG 4362 / NCIMB 8255 / S1).